The primary structure comprises 1601 residues: PH and SEC7 domain-containing protein (1601 aa).

The segment at 1-340 (MSEELKVVLR…TGDLILNLSR (340 aa)) is mediates regulation of axon branching and microtubule organization. Residues 6–88 (KVVLRRSEQH…LVTLELKRDP (83 aa)) form the PDZ domain. Disordered stretches follow at residues 113-192 (NIYD…SSTK), 211-322 (TSPT…PAKA), 339-440 (SRTP…SLTN), 459-657 (LEED…SSSG), 737-780 (NSSL…SETA), 872-965 (QQQQ…LLSC), and 1040-1126 (QQLK…SDVE). Positions 118 to 128 (HSSSTNSSPNH) are enriched in polar residues. Residues 166–191 (ASGSTTTTTTATHTHSHSRNSSASST) are compositionally biased toward low complexity. Polar residues predominate over residues 283–297 (QSLQHSNSYSGSPVT). A compositionally biased stretch (basic and acidic residues) spans 300–311 (RFADREPEREPE). The Microtubule elimination domain (MTED); Binds tubulin and blocks microtubule polymerization signature appears at 323 to 340 (PRFEAYMMTGDLILNLSR). The span at 339-348 (SRTPQTSNPL) shows a compositional bias: polar residues. Residues 353 to 362 (KKIDSLRDSP) show a composition bias toward basic and acidic residues. Composition is skewed to low complexity over residues 382–399 (SSPT…TSSD), 409–424 (QKQQ…QQQQ), and 468–487 (QRQQ…YEYY). Residues 488–505 (QNEDELEEQEEVEEEREE) show a composition bias toward acidic residues. Over residues 510–519 (YDITNIETYQ) the composition is skewed to polar residues. Positions 526 to 557 (DDDDSDRQCLVDDDDDDDAYDDEENDAGDEDY) are enriched in acidic residues. Composition is skewed to polar residues over residues 558-567 (STNSLGSGSA) and 617-630 (TSFS…SLST). The segment covering 640-657 (SVPTSPEPSSLVPESSSG) has biased composition (low complexity). The segment covering 737–747 (NSSLASNNNEG) has biased composition (polar residues). Composition is skewed to low complexity over residues 752 to 780 (NRSS…SETA), 872 to 942 (QQQQ…QQQQ), 949 to 965 (GGQV…LLSC), and 1040 to 1052 (QQLK…QQQQ). Residues 894–1601 (SSSPQHSAVG…PTNRKEKKKK (708 aa)) form a mediates association to the membrane and rescricts the microtubule-inhibiting activity to the cell cortex region. Over residues 1053 to 1071 (QRERERDRDRDREQSEHKV) the composition is skewed to basic and acidic residues. Positions 1125-1291 (VESLHSYHYS…KSLYQAIKTK (167 aa)) constitute an SEC7 domain. The 114-residue stretch at 1332-1445 (VEYKKGYVMR…WVETINYVCA (114 aa)) folds into the PH domain. A disordered region spans residues 1544–1601 (LELQAQQPSPASHEEEADTFPVGTTACTPPTPQSINQKDQQKEQQQQQPTNRKEKKKK). Residues 1568-1579 (TACTPPTPQSIN) are compositionally biased toward polar residues.

This sequence belongs to the PSD family. As to quaternary structure, interacts (via MTED motif) with tubulin. In terms of tissue distribution, expressed in the head (at protein level).

The protein localises to the cell projection. It localises to the axon. It is found in the cytoplasm. The protein resides in the cell membrane. Its subcellular location is the cell cortex. Functionally, guanine nucleotide exchange factor for Arf6. Regulates axon growth and branching by inhibiting microtubule polymerisation at the cortex. Together with shot, promotes axonal microtubule bundle integrity. Required for normal ethanol-induced tolerance and preference. Probably by activating Arf6, counteracts ethanol-induced sedation. The sequence is that of PH and SEC7 domain-containing protein from Drosophila melanogaster (Fruit fly).